Here is a 75-residue protein sequence, read N- to C-terminus: Small ribosomal subunit protein bS18 (75 aa).

Belongs to the bacterial ribosomal protein bS18 family. In terms of assembly, part of the 30S ribosomal subunit. Forms a tight heterodimer with protein bS6.

Functionally, binds as a heterodimer with protein bS6 to the central domain of the 16S rRNA, where it helps stabilize the platform of the 30S subunit. In Dinoroseobacter shibae (strain DSM 16493 / NCIMB 14021 / DFL 12), this protein is Small ribosomal subunit protein bS18.